The chain runs to 368 residues: Tetraacyldisaccharide 4'-kinase (368 aa).

66–73 (TVGGTGKT) contributes to the ATP binding site.

It belongs to the LpxK family.

The enzyme catalyses a lipid A disaccharide + ATP = a lipid IVA + ADP + H(+). Its pathway is glycolipid biosynthesis; lipid IV(A) biosynthesis; lipid IV(A) from (3R)-3-hydroxytetradecanoyl-[acyl-carrier-protein] and UDP-N-acetyl-alpha-D-glucosamine: step 6/6. In terms of biological role, transfers the gamma-phosphate of ATP to the 4'-position of a tetraacyldisaccharide 1-phosphate intermediate (termed DS-1-P) to form tetraacyldisaccharide 1,4'-bis-phosphate (lipid IVA). This Desulfatibacillum aliphaticivorans protein is Tetraacyldisaccharide 4'-kinase.